The sequence spans 506 residues: 2,3-bisphosphoglycerate-independent phosphoglycerate mutase (506 aa).

Residues D13 and S63 each coordinate Mn(2+). Catalysis depends on S63, which acts as the Phosphoserine intermediate. Substrate-binding positions include H124, 153–154 (RD), R183, R189, 254–257 (RADR), and K330. Mn(2+)-binding residues include D396, H400, D437, H438, and H456.

This sequence belongs to the BPG-independent phosphoglycerate mutase family. In terms of assembly, monomer. Requires Mn(2+) as cofactor.

The catalysed reaction is (2R)-2-phosphoglycerate = (2R)-3-phosphoglycerate. It participates in carbohydrate degradation; glycolysis; pyruvate from D-glyceraldehyde 3-phosphate: step 3/5. Its function is as follows. Catalyzes the interconversion of 2-phosphoglycerate and 3-phosphoglycerate. The chain is 2,3-bisphosphoglycerate-independent phosphoglycerate mutase from Cereibacter sphaeroides (strain ATCC 17025 / ATH 2.4.3) (Rhodobacter sphaeroides).